Consider the following 565-residue polypeptide: Ubiquitin carboxyl-terminal hydrolase 21 (565 aa).

A compositionally biased stretch (basic and acidic residues) spans 1-14 (MPQASEHRLGRTRE). Disordered regions lie at residues 1–103 (MPQA…LPLP), 109–128 (ARSK…ALGG), and 142–163 (LALR…LGGF). Pro residues predominate over residues 42–57 (APGPNPMLRPLPPRPG). The span at 58–70 (PPEERLKKLELGR) shows a compositional bias: basic and acidic residues. The segment covering 71–82 (GRTSGPRPSGPL) has biased composition (low complexity). A Nuclear export signal motif is present at residues 134 to 152 (ELGAALSRLALRPEPPPLR). Positions 212–558 (VGLRNLGNTC…EGYVLFYQLM (347 aa)) constitute a USP domain. Cys-221 (nucleophile) is an active-site residue. Zn(2+)-binding residues include Cys-384, Cys-387, Cys-437, and Cys-440. Catalysis depends on His-518, which acts as the Proton acceptor.

Belongs to the peptidase C19 family. USP21 subfamily. As to quaternary structure, interacts with BEND3.

Its subcellular location is the cytoplasm. The protein localises to the nucleus. The catalysed reaction is Thiol-dependent hydrolysis of ester, thioester, amide, peptide and isopeptide bonds formed by the C-terminal Gly of ubiquitin (a 76-residue protein attached to proteins as an intracellular targeting signal).. In terms of biological role, deubiquitinating enzyme that hydrolyzes 'Lys-6'- and 'Lys-11'-linked polyubiquitin. Also hydrolyzes heterotypic (mixed and branched) and homotypic chains. Important regulator of energy metabolism. Glucose and fatty acids trigger its nuclear translocation by CBP-dependent acetylation. In the nucleus, deubiquitinates and stabilizes the nuclear receptor PPARD regulating the expression of various genes involved in glucose and lipid metabolism and oxidative phosphorylation. Also acts as a negative regulator of the ribosome quality control (RQC) by mediating deubiquitination of 40S ribosomal proteins RPS10/eS10 and RPS20/uS10, thereby antagonizing ZNF598-mediated 40S ubiquitination. The chain is Ubiquitin carboxyl-terminal hydrolase 21 (USP21) from Bos taurus (Bovine).